A 155-amino-acid chain; its full sequence is Large ribosomal subunit protein uL30 (155 aa).

This sequence belongs to the universal ribosomal protein uL30 family. In terms of assembly, part of the 50S ribosomal subunit.

The sequence is that of Large ribosomal subunit protein uL30 from Pyrococcus horikoshii (strain ATCC 700860 / DSM 12428 / JCM 9974 / NBRC 100139 / OT-3).